Reading from the N-terminus, the 367-residue chain is UDP-N-acetylglucosamine--N-acetylmuramyl-(pentapeptide) pyrophosphoryl-undecaprenol N-acetylglucosamine transferase (367 aa).

UDP-N-acetyl-alpha-D-glucosamine-binding positions include 15-17, Asn-127, Arg-163, Ser-191, Ile-249, and Gln-294; that span reads TGG.

The protein belongs to the glycosyltransferase 28 family. MurG subfamily.

Its subcellular location is the cell inner membrane. It catalyses the reaction di-trans,octa-cis-undecaprenyl diphospho-N-acetyl-alpha-D-muramoyl-L-alanyl-D-glutamyl-meso-2,6-diaminopimeloyl-D-alanyl-D-alanine + UDP-N-acetyl-alpha-D-glucosamine = di-trans,octa-cis-undecaprenyl diphospho-[N-acetyl-alpha-D-glucosaminyl-(1-&gt;4)]-N-acetyl-alpha-D-muramoyl-L-alanyl-D-glutamyl-meso-2,6-diaminopimeloyl-D-alanyl-D-alanine + UDP + H(+). Its pathway is cell wall biogenesis; peptidoglycan biosynthesis. Its function is as follows. Cell wall formation. Catalyzes the transfer of a GlcNAc subunit on undecaprenyl-pyrophosphoryl-MurNAc-pentapeptide (lipid intermediate I) to form undecaprenyl-pyrophosphoryl-MurNAc-(pentapeptide)GlcNAc (lipid intermediate II). This Burkholderia cenocepacia (strain ATCC BAA-245 / DSM 16553 / LMG 16656 / NCTC 13227 / J2315 / CF5610) (Burkholderia cepacia (strain J2315)) protein is UDP-N-acetylglucosamine--N-acetylmuramyl-(pentapeptide) pyrophosphoryl-undecaprenol N-acetylglucosamine transferase.